We begin with the raw amino-acid sequence, 202 residues long: Peptide deformylase (202 aa).

Residues 1 to 24 are disordered; it reads MAGSFAQLAKNAEKKKPSISVSKE. Residues C121 and H163 each coordinate Fe cation. Residue E164 is part of the active site. Residue H167 coordinates Fe cation.

The protein belongs to the polypeptide deformylase family. The cofactor is Fe(2+).

It catalyses the reaction N-terminal N-formyl-L-methionyl-[peptide] + H2O = N-terminal L-methionyl-[peptide] + formate. Its function is as follows. Removes the formyl group from the N-terminal Met of newly synthesized proteins. Requires at least a dipeptide for an efficient rate of reaction. N-terminal L-methionine is a prerequisite for activity but the enzyme has broad specificity at other positions. The polypeptide is Peptide deformylase (Prochlorococcus marinus (strain NATL1A)).